The following is a 146-amino-acid chain: Hemoglobin subunit beta (146 aa).

The Globin domain occupies 2–146 (EWTQQERSII…VVFALGRKYH (145 aa)). The heme b site is built by histidine 63 and histidine 92.

This sequence belongs to the globin family. As to quaternary structure, heterotetramer of two alpha chains and two beta chains. In terms of tissue distribution, red blood cells.

Functionally, involved in oxygen transport from gills to the various peripheral tissues. This is Hemoglobin subunit beta (hbb) from Thunnus thynnus (Atlantic bluefin tuna).